Here is a 614-residue protein sequence, read N- to C-terminus: Putative Na(+)/H(+) antiporter YjbQ (614 aa).

13 helical membrane passes run His-3–Leu-23, Val-32–Val-52, Trp-57–Ile-77, Ile-107–Phe-127, Asn-130–Leu-150, Ile-163–Ser-183, Met-193–Phe-213, Gly-225–Leu-244, Leu-248–Ser-267, Gly-282–Phe-302, Ile-307–Met-327, Ile-338–Ile-358, and Asn-368–Phe-388. Residues Lys-401 to Leu-519 enclose the RCK N-terminal domain. The region spanning Pro-533–Gly-614 is the RCK C-terminal domain.

This sequence belongs to the monovalent cation:proton antiporter 2 (CPA2) transporter (TC 2.A.37) family.

It is found in the cell membrane. Binds cyclic di-AMP (c-di-AMP), which may regulate the transporter activity. Functionally, probable Na(+)/H(+) antiporter. This Bacillus subtilis (strain 168) protein is Putative Na(+)/H(+) antiporter YjbQ.